The chain runs to 139 residues: Transcription antitermination protein NusB (139 aa).

Belongs to the NusB family.

Its function is as follows. Involved in transcription antitermination. Required for transcription of ribosomal RNA (rRNA) genes. Binds specifically to the boxA antiterminator sequence of the ribosomal RNA (rrn) operons. The protein is Transcription antitermination protein NusB of Escherichia coli (strain K12 / MC4100 / BW2952).